The primary structure comprises 388 residues: D-alanyl-D-alanine carboxypeptidase DacD (388 aa).

An N-terminal signal peptide occupies residues 1–21 (MKRRLIIAASLFVFNLSSGFA). Ser-63 (acyl-ester intermediate) is an active-site residue. The active-site Proton acceptor is Lys-66. Residue Ser-129 is part of the active site. Residue Lys-232 participates in substrate binding.

This sequence belongs to the peptidase S11 family.

It localises to the cell inner membrane. The enzyme catalyses Preferential cleavage: (Ac)2-L-Lys-D-Ala-|-D-Ala. Also transpeptidation of peptidyl-alanyl moieties that are N-acyl substituents of D-alanine.. The protein operates within cell wall biogenesis; peptidoglycan biosynthesis. Its function is as follows. Removes C-terminal D-alanyl residues from sugar-peptide cell wall precursors. This Escherichia coli (strain K12) protein is D-alanyl-D-alanine carboxypeptidase DacD (dacD).